Here is a 44-residue protein sequence, read N- to C-terminus: Protein PsbN (44 aa).

A helical transmembrane segment spans residues 6-26; the sequence is FFFTIFLWCLLLSVTGYSVYV.

Belongs to the PsbN family.

It is found in the plastid. The protein localises to the chloroplast thylakoid membrane. In terms of biological role, may play a role in photosystem I and II biogenesis. This Oltmannsiellopsis viridis (Marine flagellate) protein is Protein PsbN.